Here is a 388-residue protein sequence, read N- to C-terminus: Xylose isomerase (388 aa).

Catalysis depends on residues histidine 54 and aspartate 57. Residues glutamate 181, glutamate 217, histidine 220, aspartate 245, aspartate 255, aspartate 257, and aspartate 287 each contribute to the Mg(2+) site.

The protein belongs to the xylose isomerase family. In terms of assembly, homotetramer. The cofactor is Mg(2+).

It is found in the cytoplasm. The catalysed reaction is alpha-D-xylose = alpha-D-xylulofuranose. Its function is as follows. Involved in D-xylose catabolism. This chain is Xylose isomerase (xylA), found in Streptomyces murinus.